The chain runs to 475 residues: tRNA-2-methylthio-N(6)-dimethylallyladenosine synthase (475 aa).

The MTTase N-terminal domain occupies 2-119; it reads AKLHITTWGC…LPEMINKIRG (118 aa). The [4Fe-4S] cluster site is built by Cys11, Cys48, Cys82, Cys156, Cys160, and Cys163. The 233-residue stretch at 142 to 374 folds into the Radical SAM core domain; it reads RAEGPTAFVS…QQRINHQAMQ (233 aa). Residues 377 to 440 enclose the TRAM domain; the sequence is RAMLGTEQRV…TNSLRGEVVR (64 aa).

The protein belongs to the methylthiotransferase family. MiaB subfamily. Monomer. The cofactor is [4Fe-4S] cluster.

It localises to the cytoplasm. It catalyses the reaction N(6)-dimethylallyladenosine(37) in tRNA + (sulfur carrier)-SH + AH2 + 2 S-adenosyl-L-methionine = 2-methylsulfanyl-N(6)-dimethylallyladenosine(37) in tRNA + (sulfur carrier)-H + 5'-deoxyadenosine + L-methionine + A + S-adenosyl-L-homocysteine + 2 H(+). Catalyzes the methylthiolation of N6-(dimethylallyl)adenosine (i(6)A), leading to the formation of 2-methylthio-N6-(dimethylallyl)adenosine (ms(2)i(6)A) at position 37 in tRNAs that read codons beginning with uridine. The sequence is that of tRNA-2-methylthio-N(6)-dimethylallyladenosine synthase from Actinobacillus pleuropneumoniae serotype 3 (strain JL03).